The primary structure comprises 465 residues: Auxin transporter-like protein 3 (465 aa).

Topologically, residues 1-52 (MTSEKVETVVAGNYLEMEREEEGSKSTTGKLSKFFWHGGSVYDAWFSCASNQ) are cytoplasmic. A helical transmembrane segment spans residues 53–70 (VAQVLLTLPYSFSQLGML). Topologically, residues 71-72 (SG) are extracellular. A helical transmembrane segment spans residues 73-93 (ILFQIFYGLMGSWTAYIISVL). Residues 94 to 129 (YVEYRTRKEREKVDFRNHVIQWFEVLDGLLGKHWRN) are Cytoplasmic-facing. A helical transmembrane segment spans residues 130-150 (LGLFFNCTFLLFGSVIQLIAC). Residues 151-165 (ASNIYYINDHLDKRT) lie on the Extracellular side of the membrane. A helical transmembrane segment spans residues 166 to 186 (WTYIFGACCATTVFIPSFHNY). At 187 to 189 (RIW) the chain is on the cytoplasmic side. Residues 190–210 (SFLGLVMTTYTAWYMTIASIL) traverse the membrane as a helical segment. Residues 211–225 (HGQAEDVKHSGPTKL) lie on the Extracellular side of the membrane. Residues 226 to 246 (VLYFTGATNILYTFGGHAVTV) form a helical membrane-spanning segment. Over 247 to 259 (EIMHAMWKPQKFK) the chain is Cytoplasmic. The chain crosses the membrane as a helical span at residues 260–280 (MIYLIATLYVMTLTLPSAAAV). Residues 281 to 307 (YWAFGDNLLTHSNALSLLPRTGFRDTA) lie on the Extracellular side of the membrane. The chain crosses the membrane as a helical span at residues 308–328 (VILMLIHQFITFGFACTPLYF). Residues 329–349 (VWEKFLGVHETKSLLKRALVR) lie on the Cytoplasmic side of the membrane. Residues 350 to 370 (LPVVIPIWFLAIIFPFFGPIN) traverse the membrane as a helical segment. At 371–374 (STVG) the chain is on the extracellular side. Residues 375-395 (SLLVSFTVYIIPALAHMVTFA) traverse the membrane as a helical segment. Residues 396–421 (SAPARENAVERPPSFLGGWVGLYSVN) lie on the Cytoplasmic side of the membrane. The chain crosses the membrane as a helical span at residues 422-442 (VFVAVWVLVVGFGLGGWASML). Residues 443–465 (NFVHQIKTFGLFAKCFQCPPHKA) lie on the Extracellular side of the membrane.

The protein belongs to the amino acid/polyamine transporter 2 family. Amino acid/auxin permease (AAAP) (TC 2.A.18.1) subfamily. As to expression, shoots and roots of nodulating plants. Low levels in roots, nodules, stems, petioles, leaves, shoot apices and flowers.

The protein resides in the cell membrane. Functionally, carrier protein involved in proton-driven auxin influx. Mediates the formation of auxin gradient from developing leaves (site of auxin biosynthesis) to tips by contributing to the loading of auxin in vascular tissues and facilitating acropetal (base to tip) auxin transport within inner tissues of the root apex, and basipetal (tip to base) auxin transport within outer tissues of the root apex. May be involved in lateral roots and nodules formation. The protein is Auxin transporter-like protein 3 (LAX3) of Medicago truncatula (Barrel medic).